The following is a 405-amino-acid chain: Acetylornithine/succinyldiaminopimelate aminotransferase (405 aa).

Residues 108-109 (GT) and Phe-141 each bind pyridoxal 5'-phosphate. Arg-144 is a N(2)-acetyl-L-ornithine binding site. 226–229 (DEVQ) contacts pyridoxal 5'-phosphate. Lys-255 bears the N6-(pyridoxal phosphate)lysine mark. Position 283 (Ser-283) interacts with N(2)-acetyl-L-ornithine. Residue Thr-284 participates in pyridoxal 5'-phosphate binding.

The protein belongs to the class-III pyridoxal-phosphate-dependent aminotransferase family. ArgD subfamily. In terms of assembly, homodimer. It depends on pyridoxal 5'-phosphate as a cofactor.

It is found in the cytoplasm. It carries out the reaction N(2)-acetyl-L-ornithine + 2-oxoglutarate = N-acetyl-L-glutamate 5-semialdehyde + L-glutamate. The catalysed reaction is N-succinyl-(2S,6S)-2,6-diaminopimelate + 2-oxoglutarate = (S)-2-succinylamino-6-oxoheptanedioate + L-glutamate. Its pathway is amino-acid biosynthesis; L-arginine biosynthesis; N(2)-acetyl-L-ornithine from L-glutamate: step 4/4. It participates in amino-acid biosynthesis; L-lysine biosynthesis via DAP pathway; LL-2,6-diaminopimelate from (S)-tetrahydrodipicolinate (succinylase route): step 2/3. Inhibited by gabaculine (Gcn). Its function is as follows. Involved in both the arginine and lysine biosynthetic pathways. The protein is Acetylornithine/succinyldiaminopimelate aminotransferase of Salmonella typhimurium (strain LT2 / SGSC1412 / ATCC 700720).